Consider the following 140-residue polypeptide: Nucleoside diphosphate kinase (140 aa).

ATP is bound by residues K11, F59, R87, T93, R104, and N114. The active-site Pros-phosphohistidine intermediate is the H117.

It belongs to the NDK family. Homotetramer. Requires Mg(2+) as cofactor.

The protein localises to the cytoplasm. It carries out the reaction a 2'-deoxyribonucleoside 5'-diphosphate + ATP = a 2'-deoxyribonucleoside 5'-triphosphate + ADP. The enzyme catalyses a ribonucleoside 5'-diphosphate + ATP = a ribonucleoside 5'-triphosphate + ADP. Its function is as follows. Major role in the synthesis of nucleoside triphosphates other than ATP. The ATP gamma phosphate is transferred to the NDP beta phosphate via a ping-pong mechanism, using a phosphorylated active-site intermediate. The polypeptide is Nucleoside diphosphate kinase (Brucella anthropi (strain ATCC 49188 / DSM 6882 / CCUG 24695 / JCM 21032 / LMG 3331 / NBRC 15819 / NCTC 12168 / Alc 37) (Ochrobactrum anthropi)).